The primary structure comprises 387 residues: Probable purine permease 6 (387 aa).

The tract at residues 1–24 (MMELESETQELHLHVNGEPEGKFS) is disordered. The span at 9–24 (QELHLHVNGEPEGKFS) shows a compositional bias: basic and acidic residues. A run of 10 helical transmembrane segments spans residues 36–56 (LRVSLYVTLLLAGETIATLLG), 68–88 (WLETLVQLVGFPLTLPCYYYL), 106–126 (FLTLSLVYIGLGLLVAGHCIL), 129–149 (FGLLYLPVSTFSLISASQLAF), 162–182 (ITPFILNSLVLLTISSTLLVI), 201–221 (YVIGYICAVGSSAGYSLVLSL), 238–258 (ILDMATYPSMVATCVVVVGLF), 283–303 (INIGSTISWQACLIGSVGLII), 309–329 (FSNVISTLCLPVVPVLAVVFF), and 333–353 (MSGIKLVAMFLAIWGFVSYGY). The disordered stretch occupies residues 362–387 (PEEDQELPQSKEEEEQKQVDTIHVQA). Positions 370–381 (QSKEEEEQKQVD) are enriched in basic and acidic residues.

This sequence belongs to the purine permeases (TC 2.A.7.14) family.

The protein localises to the membrane. This Arabidopsis thaliana (Mouse-ear cress) protein is Probable purine permease 6 (PUP6).